The sequence spans 350 residues: S-adenosylmethionine:tRNA ribosyltransferase-isomerase (350 aa).

It belongs to the QueA family. As to quaternary structure, monomer.

The protein resides in the cytoplasm. It catalyses the reaction 7-aminomethyl-7-carbaguanosine(34) in tRNA + S-adenosyl-L-methionine = epoxyqueuosine(34) in tRNA + adenine + L-methionine + 2 H(+). Its pathway is tRNA modification; tRNA-queuosine biosynthesis. In terms of biological role, transfers and isomerizes the ribose moiety from AdoMet to the 7-aminomethyl group of 7-deazaguanine (preQ1-tRNA) to give epoxyqueuosine (oQ-tRNA). The polypeptide is S-adenosylmethionine:tRNA ribosyltransferase-isomerase (Saccharophagus degradans (strain 2-40 / ATCC 43961 / DSM 17024)).